A 589-amino-acid polypeptide reads, in one-letter code: Probable translation initiation factor IF-2 (589 aa).

One can recognise a tr-type G domain in the interval 3 to 224; that stretch reads VRSPFVVVMG…AGVSQRFIPR (222 aa). The segment at 12–19 is G1; that stretch reads GHVDVGKT. 12–19 lines the GTP pocket; it reads GHVDVGKT. A G2 region spans residues 37–41; it reads MITQH. The tract at residues 78–81 is G3; it reads DTPG. Residues 78 to 82 and 132 to 135 each bind GTP; these read DTPGH and NKLD. Positions 132-135 are G4; sequence NKLD. Residues 200 to 202 form a G5 region; that stretch reads SAV.

Belongs to the TRAFAC class translation factor GTPase superfamily. Classic translation factor GTPase family. IF-2 subfamily.

Its function is as follows. Function in general translation initiation by promoting the binding of the formylmethionine-tRNA to ribosomes. Seems to function along with eIF-2. This chain is Probable translation initiation factor IF-2, found in Pyrobaculum neutrophilum (strain DSM 2338 / JCM 9278 / NBRC 100436 / V24Sta) (Thermoproteus neutrophilus).